The sequence spans 599 residues: Elongation factor 4 (599 aa).

Positions 2–184 (KNIRNFSIIA…EIVAKIPAPK (183 aa)) constitute a tr-type G domain. GTP contacts are provided by residues 14–19 (DHGKST) and 131–134 (NKID).

It belongs to the TRAFAC class translation factor GTPase superfamily. Classic translation factor GTPase family. LepA subfamily.

It is found in the cell inner membrane. The enzyme catalyses GTP + H2O = GDP + phosphate + H(+). Its function is as follows. Required for accurate and efficient protein synthesis under certain stress conditions. May act as a fidelity factor of the translation reaction, by catalyzing a one-codon backward translocation of tRNAs on improperly translocated ribosomes. Back-translocation proceeds from a post-translocation (POST) complex to a pre-translocation (PRE) complex, thus giving elongation factor G a second chance to translocate the tRNAs correctly. Binds to ribosomes in a GTP-dependent manner. The sequence is that of Elongation factor 4 from Mannheimia succiniciproducens (strain KCTC 0769BP / MBEL55E).